We begin with the raw amino-acid sequence, 1729 residues long: Cullin-7 (1729 aa).

Residues 350 to 388 (DRPRSSARSPGSIFQPQLADVSPGLPATQAQPSFRRSRH) are disordered. Ser371 carries the post-translational modification Phosphoserine. In terms of domain architecture, CPH spans 392–465 (RSEFASGNTY…HWHMLEILGF (74 aa)). The span at 632–642 (SEDAAKVEAKE) shows a compositional bias: basic and acidic residues. The tract at residues 632–654 (SEDAAKVEAKEPPSQSPNTPLQR) is disordered. In terms of domain architecture, DOC spans 845–1024 (PINIPFFDVF…HTRLFYMVRA (180 aa)). Residues 1373 to 1405 (VGHGASGKEHKSEKEEEAGAAAAVDVAEGEEEE) form a disordered region. Lys1607 participates in a covalent cross-link: Glycyl lysine isopeptide (Lys-Gly) (interchain with G-Cter in NEDD8).

Belongs to the cullin family. Component of the 3M complex, composed of core components CUL7, CCDC8 and OBSL1. Component of the Cul7-RING(FBXW8) complex consisting of CUL7, RBX1, SKP1 and FBXW8. Within the Cul7-RING(FBXW8) complex interacts with FBXW8 and RBX1, but not with SKP1. Interacts with CUL1 (via the C-terminal domain); the interaction seems to be mediated by FBXW8; it is likely specific to FBXW8, but not other F-box proteins. Interacts (via the CPH domain) with p53/TP53; the interaction preferentially involves tetrameric and dimeric p53/TP53; this interaction recruits p53/TP53 for ubiquitination by neddylated CUL1-RBX1. The CUL7-CUL9 heterodimer seems to interact specifically with p53/TP53. Interacts with FBXW8; interaction is mutually exclusive of binding to CUL9 or p53/TP53. Interacts with CUL9; leading to inhibited CUL9 activity. Interacts with OBSL1. Interacts (as part of the 3M complex) with HDAC4 and HDAC5; it is negatively regulated by ANKRA2.

It localises to the cytoplasm. Its subcellular location is the cytoskeleton. The protein resides in the microtubule organizing center. It is found in the centrosome. The protein localises to the perinuclear region. It localises to the golgi apparatus. It participates in protein modification; protein ubiquitination. Core component of the 3M and Cul7-RING(FBXW8) complexes, which mediate the ubiquitination and subsequent proteasomal degradation of target proteins. Core component of the 3M complex, a complex required to regulate microtubule dynamics and genome integrity. It is unclear how the 3M complex regulates microtubules, it could act by controlling the level of a microtubule stabilizer. The Cul7-RING(FBXW8) complex alone lacks ubiquitination activity and does not promote polyubiquitination and proteasomal degradation of p53/TP53. However it mediates recruitment of p53/TP53 for ubiquitination by neddylated CUL1-RBX1. Interaction with CUL9 is required to inhibit CUL9 activity and ubiquitination of BIRC5. The Cul7-RING(FBXW8) complex also mediates ubiquitination and consequent degradation of target proteins such as GORASP1, IRS1 and MAP4K1/HPK1. Ubiquitination of GORASP1 regulates Golgi morphogenesis and dendrite patterning in brain. Mediates ubiquitination and degradation of IRS1 in a mTOR-dependent manner: the Cul7-RING(FBXW8) complex recognizes and binds IRS1 previously phosphorylated by S6 kinase (RPS6KB1 or RPS6KB2). The Cul7-RING(FBXW8) complex also mediates ubiquitination of MAP4K1/HPK1: recognizes and binds autophosphorylated MAP4K1/HPK1, leading to its degradation, thereby affecting cell proliferation and differentiation. Acts as a regulator in trophoblast cell epithelial-mesenchymal transition and placental development. While the Cul7-RING(FBXW8) and the 3M complexes are associated and involved in common processes, CUL7 and the Cul7-RING(FBXW8) complex may have additional functions. Probably plays a role in the degradation of proteins involved in endothelial proliferation and/or differentiation. This is Cullin-7 (CUL7) from Pongo abelii (Sumatran orangutan).